A 510-amino-acid polypeptide reads, in one-letter code: 2,3-bisphosphoglycerate-independent phosphoglycerate mutase (510 aa).

2 residues coordinate Mn(2+): aspartate 13 and serine 63. Catalysis depends on serine 63, which acts as the Phosphoserine intermediate. Substrate-binding positions include histidine 124, 154-155 (RD), arginine 186, arginine 192, 262-265 (RADR), and lysine 334. Residues aspartate 401, histidine 405, aspartate 442, histidine 443, and histidine 461 each coordinate Mn(2+).

The protein belongs to the BPG-independent phosphoglycerate mutase family. As to quaternary structure, monomer. The cofactor is Mn(2+).

It catalyses the reaction (2R)-2-phosphoglycerate = (2R)-3-phosphoglycerate. The protein operates within carbohydrate degradation; glycolysis; pyruvate from D-glyceraldehyde 3-phosphate: step 3/5. Its function is as follows. Catalyzes the interconversion of 2-phosphoglycerate and 3-phosphoglycerate. The sequence is that of 2,3-bisphosphoglycerate-independent phosphoglycerate mutase from Vibrio vulnificus (strain YJ016).